A 315-amino-acid chain; its full sequence is Ribose-phosphate pyrophosphokinase (315 aa).

ATP is bound by residues 37-39 (DGE) and 96-97 (RQ). The Mg(2+) site is built by H131 and D171. The active site involves K195. D-ribose 5-phosphate contacts are provided by residues R197, D221, and 225–229 (DTGGT).

It belongs to the ribose-phosphate pyrophosphokinase family. Class I subfamily. As to quaternary structure, homohexamer. Mg(2+) is required as a cofactor.

It localises to the cytoplasm. It catalyses the reaction D-ribose 5-phosphate + ATP = 5-phospho-alpha-D-ribose 1-diphosphate + AMP + H(+). It functions in the pathway metabolic intermediate biosynthesis; 5-phospho-alpha-D-ribose 1-diphosphate biosynthesis; 5-phospho-alpha-D-ribose 1-diphosphate from D-ribose 5-phosphate (route I): step 1/1. Functionally, involved in the biosynthesis of the central metabolite phospho-alpha-D-ribosyl-1-pyrophosphate (PRPP) via the transfer of pyrophosphoryl group from ATP to 1-hydroxyl of ribose-5-phosphate (Rib-5-P). The polypeptide is Ribose-phosphate pyrophosphokinase (Pasteurella multocida (strain Pm70)).